Here is a 1296-residue protein sequence, read N- to C-terminus: Aggregation substance (1296 aa).

Positions 1–43 (MKQQTEVKKRFKMYKAKKHWVVAPILFIGVLGVVGLATDDVQA) are cleaved as a signal peptide. 2 disordered regions span residues 48–188 (TQPG…KPAE) and 1221–1245 (HTPE…TPQA). The span at 89 to 99 (KVEEVASEKNG) shows a compositional bias: basic and acidic residues. 2 stretches are compositionally biased toward polar residues: residues 100 to 117 (AEQS…QQPT) and 125 to 138 (QEQP…TNEP). Over residues 160-178 (KEFETPDVDKAVDEAKKDP) the composition is skewed to basic and acidic residues. An LPXTG sorting signal motif is present at residues 1261–1265 (LPQTG). Thr-1264 carries the pentaglycyl murein peptidoglycan amidated threonine modification. Residues 1265–1296 (GEKQNVLLTVAGSLAAMLGLAGLGFKRRKETK) constitute a propeptide, removed by sortase.

Belongs to the antigen I/II family.

Its subcellular location is the secreted. It localises to the cell wall. Functionally, aggregation substance allows donor and recipient strains to form tight aggregates which allow the non-motile bacteria to maintain physical contact over a period of time sufficient to permit conjugative transfer of the sex pheromone plasmid from donor to recipient strains. The sequence is that of Aggregation substance (asa1) from Enterococcus faecalis (strain ATCC 700802 / V583).